A 366-amino-acid polypeptide reads, in one-letter code: tRNA/tmRNA (uracil-C(5))-methyltransferase (366 aa).

Positions 190, 218, 223, 239, and 299 each coordinate S-adenosyl-L-methionine. The active-site Nucleophile is Cys-324. Glu-358 acts as the Proton acceptor in catalysis.

This sequence belongs to the class I-like SAM-binding methyltransferase superfamily. RNA M5U methyltransferase family. TrmA subfamily.

It carries out the reaction uridine(54) in tRNA + S-adenosyl-L-methionine = 5-methyluridine(54) in tRNA + S-adenosyl-L-homocysteine + H(+). The catalysed reaction is uridine(341) in tmRNA + S-adenosyl-L-methionine = 5-methyluridine(341) in tmRNA + S-adenosyl-L-homocysteine + H(+). Its function is as follows. Dual-specificity methyltransferase that catalyzes the formation of 5-methyluridine at position 54 (m5U54) in all tRNAs, and that of position 341 (m5U341) in tmRNA (transfer-mRNA). The protein is tRNA/tmRNA (uracil-C(5))-methyltransferase of Salmonella choleraesuis (strain SC-B67).